We begin with the raw amino-acid sequence, 664 residues long: ATP synthase subunit alpha 2 (664 aa).

180–187 (GDRATGKT) serves as a coordination point for ATP. Positions 525 to 664 (MPAEDAAGDI…DAEAEARHKR (140 aa)) are disordered. Residues 543–588 (ARGDADRDADHGANREVSREVSPEASREVSREVSCEVSHEADRDAA) show a composition bias toward basic and acidic residues. Residues 589 to 599 (ADAARVAGRAP) are compositionally biased toward low complexity. The segment covering 621–639 (ADGDRASASRPRPDARGDA) has biased composition (basic and acidic residues).

This sequence belongs to the ATPase alpha/beta chains family. As to quaternary structure, F-type ATPases have 2 components, CF(1) - the catalytic core - and CF(0) - the membrane proton channel. CF(1) has five subunits: alpha(3), beta(3), gamma(1), delta(1), epsilon(1). CF(0) has three main subunits: a(1), b(2) and c(9-12). The alpha and beta chains form an alternating ring which encloses part of the gamma chain. CF(1) is attached to CF(0) by a central stalk formed by the gamma and epsilon chains, while a peripheral stalk is formed by the delta and b chains.

Its subcellular location is the cell inner membrane. It catalyses the reaction ATP + H2O + 4 H(+)(in) = ADP + phosphate + 5 H(+)(out). In terms of biological role, produces ATP from ADP in the presence of a proton gradient across the membrane. The alpha chain is a regulatory subunit. The sequence is that of ATP synthase subunit alpha 2 from Burkholderia pseudomallei (strain 1710b).